Reading from the N-terminus, the 992-residue chain is ATP-dependent DNA helicase PIF7 (992 aa).

A mitochondrion-targeting transit peptide spans 1-21 (MWDGPLRSRQNLRTVAKLRSS). Disordered stretches follow at residues 20-43 (SSGC…GETA), 145-182 (TVNK…TAAS), and 190-209 (LDSS…AVTQ). 3 stretches are compositionally biased toward polar residues: residues 23–43 (CPLT…GETA), 173–182 (NVDNTTTAAS), and 191–208 (DSSS…QAVT). Residue 237-244 (GGAGTGKS) participates in ATP binding. A DNA-binding region spans residues 651–670 (QAYVALSRCTDVANLVIENF).

This sequence belongs to the helicase family. PIF1 subfamily. Monomer. The cofactor is Mg(2+).

It localises to the mitochondrion matrix. The protein resides in the kinetoplast. The enzyme catalyses Couples ATP hydrolysis with the unwinding of duplex DNA at the replication fork by translocating in the 5'-3' direction. This creates two antiparallel DNA single strands (ssDNA). The leading ssDNA polymer is the template for DNA polymerase III holoenzyme which synthesizes a continuous strand.. It catalyses the reaction ATP + H2O = ADP + phosphate + H(+). In terms of biological role, DNA-dependent ATPase and 5'-3' DNA helicase required for the maintenance of mitochondrial (kinetoplast) genome stability. This Trypanosoma brucei brucei (strain 927/4 GUTat10.1) protein is ATP-dependent DNA helicase PIF7.